The chain runs to 496 residues: Sodium/sialic acid symporter SiaT (496 aa).

Topologically, residues 1–7 (MQLHDFG) are periplasmic. A helical membrane pass occupies residues 8–29 (FINYAVLFGYLAAMLLVGVYFS). At 30 to 46 (KRQKTADDYFRGGGRVP) the chain is on the cytoplasmic side. A helical membrane pass occupies residues 47 to 59 (GWAAGVSVFATTL). Ala-56 is a binding site for Na(+). Residue Thr-58 coordinates N-acetyl-alpha-neuraminate. Residue Leu-59 coordinates Na(+). N-acetyl-alpha-neuraminate contacts are provided by Ser-60, Thr-63, and Gln-82. Topologically, residues 60 to 76 (SSITFMSIPAKAYTSDW) are periplasmic. Residues 77-92 (TFIIGQYLAIAILPLV) form a helical membrane-spanning segment. The Cytoplasmic segment spans residues 93–116 (FYFYIPFFRKLKITSAYEYLEARF). The chain crosses the membrane as a helical span at residues 117–144 (DVRSRLFASLSFMLFHIGRVAIITYLTV). Arg-135 lines the N-acetyl-alpha-neuraminate pocket. Topologically, residues 145 to 154 (LALRPFMGID) are periplasmic. The helical transmembrane segment at 155 to 172 (PVVLIVLISLLCIIYTWM) threads the bilayer. Residues 173–174 (GG) lie on the Cytoplasmic side of the membrane. A helical transmembrane segment spans residues 175-199 (IEGVIWTDVIQGLLLSGGAVLIFIM). Asp-182 contacts Na(+). Residues 200–235 (ICFKVDGGISEIFTTTAQADKFFPTTQWRWSWTDST) are Periplasmic-facing. The chain crosses the membrane as a helical span at residues 236–252 (IPVLMIGFLFANIQQFT). Residues 253–272 (ASQDVVQRYIVTDSIKETKR) are Cytoplasmic-facing. Residues 273–292 (TLITNAKLVAIIPIFFFAIG) traverse the membrane as a helical segment. Residues 293–325 (SALFVYYQQNPSLLPAGFNTGGILPLFIVTEMP) lie on the Periplasmic side of the membrane. Residues 326–356 (IGIAGLIIAAIFAAAQSSISSSLNSISSCFN) form a helical membrane-spanning segment. Ala-339, Ser-342, Ser-343, Ser-345, and Ser-346 together coordinate Na(+). The Cytoplasmic portion of the chain corresponds to 357–374 (SDIYTRLSKSSPSPEQKM). The helical transmembrane segment at 375–396 (KVAKLVIIVAGIFSSLAAIWLV) threads the bilayer. The Periplasmic portion of the chain corresponds to 397-403 (LSDEAEI). The helical transmembrane segment at 404–427 (WDAFNSLIGLMGGPMTGLFMLGIF) threads the bilayer. Residues 428–432 (VKRAN) are Cytoplasmic-facing. Residues 433-453 (AGSAVVGIIVSIIAVLAARYG) form a helical membrane-spanning segment. Residues 454 to 457 (SDLN) are Periplasmic-facing. A helical transmembrane segment spans residues 458-479 (FFFYGVIGSMSVVIAGTITAPL). At 480–496 (FAPAKQLSLDDSETSEN) the chain is on the cytoplasmic side.

Belongs to the sodium:solute symporter (SSF) (TC 2.A.21) family.

It is found in the cell inner membrane. It carries out the reaction N-acetyl-alpha-neuraminate(out) + 2 Na(+)(out) = N-acetyl-alpha-neuraminate(in) + 2 Na(+)(in). Both Na(+) sites regulate Neu5Ac transport. The binding energy of the second Na(+) ion may be used to allosterically stabilize the substrate without directly coordinating it. In the absence of external Na(+), the rate is reduced by 78%. Functionally, symporter that uses the Na(+) gradient as the driving force for the uptake of the sialic acid N-acetylneuraminic acid (Neu5Ac). It allows the use of host-derived Neu5Ac as an energy source by P.mirabilis. Also binds N-glycolylneuraminic acid (Neu5Gc) and ketodeoxynonulosonic acid (KDN). Shows the highest affinity for Neu5Ac and Neu5Gc, which commonly occupy the terminal non-reducing position of mammalian cell surface glycoconjugates. The polypeptide is Sodium/sialic acid symporter SiaT (Proteus mirabilis (strain HI4320)).